Here is a 660-residue protein sequence, read N- to C-terminus: Genome-linked protein precursor (660 aa).

The N-terminal stretch at 1–25 (MALLGIKLMTLVFAAWLSCCHSSSA) is a signal peptide. The next 2 helical transmembrane spans lie at 131 to 151 (AVGMLLMIIIWIWSSIFLVVY) and 165 to 185 (AVCVGFLIFCTICAFRLISWI). In terms of domain architecture, Peptidase S39 spans 224 to 416 (VEGYKPFIIP…GLTSPDFKFE (193 aa)). Active-site for protease activity residues include His272, Asp304, and Ser373. Disordered regions lie at residues 463 to 490 (EEESESDDERGKVVPPAKPSNYGEGCPP) and 595 to 660 (TKAP…AWVR).

The protein belongs to the peptidase S39B family.

Its subcellular location is the host membrane. In terms of biological role, precursor from which the VPg molecule is probably released at the onset of the RNA synthesis. Essential for virus replication. The chain is Genome-linked protein precursor from Euphorbia pulcherrima (Poinsettia).